Reading from the N-terminus, the 48-residue chain is DNA gyrase inhibitor YacG (48 aa).

Cys-9, Cys-12, Cys-28, and Cys-32 together coordinate Zn(2+).

It belongs to the DNA gyrase inhibitor YacG family. In terms of assembly, interacts with GyrB. Requires Zn(2+) as cofactor.

Inhibits all the catalytic activities of DNA gyrase by preventing its interaction with DNA. Acts by binding directly to the C-terminal domain of GyrB, which probably disrupts DNA binding by the gyrase. This chain is DNA gyrase inhibitor YacG, found in Wigglesworthia glossinidia brevipalpis.